A 478-amino-acid chain; its full sequence is Ribosome biogenesis protein NOP53 (478 aa).

Residues 1 to 10 are compositionally biased toward gly residues; sequence MAAGGSGVGG. The segment at 1-51 is disordered; it reads MAAGGSGVGGKRSSKSDADSGFLGLRPTSVDPALRRRRRGPRNKKRGWRRL. Alanine 2 carries the post-translational modification N-acetylalanine. Serine 29 carries the phosphoserine modification. A compositionally biased stretch (basic residues) spans 35–49; it reads RRRRRGPRNKKRGWR. Serine 93 and serine 305 each carry phosphoserine. The tract at residues 148-431 is mediates interaction with CDKN2A/isoform tumor suppressor ARF; sequence KEQLWEKLAK…SELTDSLRTL (284 aa). The interval 181–478 is mediates interaction with NF2; that stretch reads KPGPQDTVER…EKRAFREIQL (298 aa). Residues 303-344 form a disordered region; the sequence is EESDGEGEPGQGEGPEAGDAEVCPTPARLATTEKKTEQQRRR. The span at 333 to 342 shows a compositional bias: basic and acidic residues; the sequence is TTEKKTEQQR. The segment at 342–386 is mediates interaction with human herpesvirus 8 protein ORF16; that stretch reads RRREKAVHRLRVQQAALRAARLRHQELFRLRGIKAQVALRLAELA. 2 nucleolar localization signal regions span residues 347 to 395 and 396 to 478; these read AVHR…RQAR and REAE…EIQL.

Belongs to the NOP53 family. Homooligomer. Interacts with PTEN; regulates PTEN phosphorylation and increases its stability. Interacts with RPL11; retains RPL11 into the nucleolus. Interacts with CDKN2A/isoform tumor suppressor ARF; the interaction is direct and promotes ARF nucleoplasmic relocalization and ubiquitin-mediated proteasomal degradation. Interacts with NPM1; the interaction is direct and competitive with MYC. Interacts with NF2 (via FERM domain); the interaction is direct. Interacts with p53/TP53 (via the oligomerization region); the interaction is direct and may prevent the MDM2-mediated proteasomal degradation of p53/TP53. Interacts with RIGI; may regulate RIGI through USP15-mediated 'Lys-63'-linked deubiquitination. Interacts with UBTF. As to quaternary structure, (Microbial infection) Interacts with herpes simplex virus 1 early proteins ICP22 and ICP0. In terms of assembly, (Microbial infection) Interacts with Human herpesvirus 8 protein ORF16; may sequester ORF16 in host nucleolus and reduce its antiapoptotic activity. Ubiquitin-mediated proteasomal degradation is regulated by c-JUN. It is associated with relocalization to the nucleoplasm and decreased homooligomerization. Post-translationally, phosphorylated upon DNA damage probably by ATM and DNA-PK; may regulate NOP53 degradation. Expressed at high levels in heart and pancreas, moderate levels in placenta, liver, skeletal muscle, and kidney, and low levels in brain and lung.

The protein localises to the nucleus. Its subcellular location is the nucleolus. It is found in the nucleoplasm. Functionally, nucleolar protein which is involved in the integration of the 5S RNP into the ribosomal large subunit during ribosome biogenesis. In ribosome biogenesis, may also play a role in rRNA transcription. Also functions as a nucleolar sensor that regulates the activation of p53/TP53 in response to ribosome biogenesis perturbation, DNA damage and other stress conditions. DNA damage or perturbation of ribosome biogenesis disrupt the interaction between NOP53 and RPL11 allowing RPL11 transport to the nucleoplasm where it can inhibit MDM2 and allow p53/TP53 activation. It may also positively regulate the function of p53/TP53 in cell cycle arrest and apoptosis through direct interaction, preventing its MDM2-dependent ubiquitin-mediated proteasomal degradation. Originally identified as a tumor suppressor, it may also play a role in cell proliferation and apoptosis by positively regulating the stability of PTEN, thereby antagonizing the PI3K-AKT/PKB signaling pathway. May also inhibit cell proliferation and increase apoptosis through its interaction with NF2. May negatively regulate NPM1 by regulating its nucleoplasmic localization, oligomerization and ubiquitin-mediated proteasomal degradation. Thereby, may prevent NPM1 interaction with MYC and negatively regulate transcription mediated by the MYC-NPM1 complex. May also regulate cellular aerobic respiration. In the cellular response to viral infection, may play a role in the attenuation of interferon-beta through the inhibition of RIGI. This chain is Ribosome biogenesis protein NOP53, found in Homo sapiens (Human).